The primary structure comprises 850 residues: Endoribonuclease ysh-1 (850 aa).

Zn(2+)-binding residues include His83, His85, Asp87, His88, His173, and Asp194. His442 (proton donor) is an active-site residue. Residue His464 participates in Zn(2+) binding. 2 disordered regions span residues 685–708 and 732–784; these read VKRS…PHSH and SPIV…EQQL. Polar residues predominate over residues 744 to 754; that stretch reads PTTKAITSPSE. Positions 755–766 are enriched in basic and acidic residues; sequence ETAKSSDVKSDA. Residues 767–781 are compositionally biased toward acidic residues; sequence DADASMDVSEEDEDE.

Belongs to the metallo-beta-lactamase superfamily. RNA-metabolizing metallo-beta-lactamase-like family. CPSF2/YSH1 subfamily.

Its subcellular location is the nucleus. Its function is as follows. Component of the cleavage factor I (CF I) involved in pre-mRNA 3'-end processing. This Neurospora crassa (strain ATCC 24698 / 74-OR23-1A / CBS 708.71 / DSM 1257 / FGSC 987) protein is Endoribonuclease ysh-1 (ysh-1).